The chain runs to 313 residues: Olfactory receptor 1G1 (313 aa).

The Extracellular segment spans residues 1-25 (MEGKNLTSISEFFLLGFSEQLEEQK). An N-linked (GlcNAc...) asparagine glycan is attached at Asn-5. A helical membrane pass occupies residues 26-49 (ALFGSFLFMYLVTVAGNLLIILVI). At 50-57 (ITDTQLHT) the chain is on the cytoplasmic side. The chain crosses the membrane as a helical span at residues 58-79 (PMYFFLANLSLADACFVSTTVP). At 80 to 100 (KMLANIQIQSQAISYSGCLLQ) the chain is on the extracellular side. Cysteines 97 and 189 form a disulfide. A helical membrane pass occupies residues 101 to 120 (LYFFMLFVMLEAFLLAVMAY). The Cytoplasmic portion of the chain corresponds to 121–140 (DRYVAICHPLHYILIMSPGL). The chain crosses the membrane as a helical span at residues 141 to 158 (CVFLVSASWIMNALHSLL). Residues 159 to 196 (HTLLMNSLSFCANHEIPHFFCDIDPLLSLSCTDPFTNE) are Extracellular-facing. The chain crosses the membrane as a helical span at residues 197–219 (LVIFITGGLTGLVCVLCLIISYT). Over 220 to 236 (NIFSTILKIPSAQGKRK) the chain is Cytoplasmic. The chain crosses the membrane as a helical span at residues 237-259 (AFSTCGSHLSVVSLFFGTSFCVY). Over 260–272 (FIPPSTRSAQKDT) the chain is Extracellular. A helical membrane pass occupies residues 273–292 (VASVMYTVVTPMLNPFIYSL). The Cytoplasmic segment spans residues 293 to 313 (RNQEIKSSLRKLIWVREIHSP).

This sequence belongs to the G-protein coupled receptor 1 family.

It localises to the cell membrane. In terms of biological role, odorant receptor. The sequence is that of Olfactory receptor 1G1 (OR1G1) from Gorilla gorilla gorilla (Western lowland gorilla).